Here is a 337-residue protein sequence, read N- to C-terminus: Methylthioribose-1-phosphate isomerase (337 aa).

Substrate contacts are provided by residues 51–53 (RGA), arginine 88, and glutamine 187. Residue aspartate 228 is the Proton donor of the active site. A substrate-binding site is contributed by 238-239 (NK).

Belongs to the eIF-2B alpha/beta/delta subunits family. MtnA subfamily.

The enzyme catalyses 5-(methylsulfanyl)-alpha-D-ribose 1-phosphate = 5-(methylsulfanyl)-D-ribulose 1-phosphate. Its pathway is amino-acid biosynthesis; L-methionine biosynthesis via salvage pathway; L-methionine from S-methyl-5-thio-alpha-D-ribose 1-phosphate: step 1/6. In terms of biological role, catalyzes the interconversion of methylthioribose-1-phosphate (MTR-1-P) into methylthioribulose-1-phosphate (MTRu-1-P). The polypeptide is Methylthioribose-1-phosphate isomerase (Anaeromyxobacter sp. (strain Fw109-5)).